A 494-amino-acid polypeptide reads, in one-letter code: Cysteine protease ATG4 (494 aa).

Residues 102–105 (FVPI) carry the APEAR motif. C147 acts as the Nucleophile in catalysis. S307 is subject to Phosphoserine. Residues D322 and H324 contribute to the active site. C338 and C394 are oxidised to a cystine. The LIR signature appears at 424–427 (YVDI). S488 is modified (phosphoserine).

The protein belongs to the peptidase C54 family. Interacts with ATG8. Interacts with TUB1 and TUB2. Phosphorylation at Ser-307 by ATG1 inhibits autophagy: it takes place on autophagosome membranes and decreases its interaction with ATG8, thereby impairing deconjugation of PE-conjugated forms of ATG8. In terms of processing, formation of a disulfide bond between Cys-338 and Cys-394 leads to reduced autophagy. The disulfide bond is reduced by thioredoxin.

It localises to the cytoplasm. It is found in the nucleus. The protein localises to the preautophagosomal structure. The enzyme catalyses [protein]-C-terminal L-amino acid-glycyl-phosphatidylethanolamide + H2O = [protein]-C-terminal L-amino acid-glycine + a 1,2-diacyl-sn-glycero-3-phosphoethanolamine. Its function is as follows. Cysteine protease that plays a key role in cytoplasm to vacuole transport (Cvt) and autophagy by mediating both proteolytic activation and delipidation of ATG8. Required for selective autophagic degradation of the nucleus (nucleophagy) as well as for mitophagy which contributes to regulate mitochondrial quantity and quality by eliminating the mitochondria to a basal level to fulfill cellular energy requirements and preventing excess ROS production. The protease activity is required for proteolytic activation of ATG8: cleaves the C-terminal amino acid of ATG8 to reveal a C-terminal glycine. ATG8 ubiquitin-like activity requires the exposure of the glycine at the C-terminus for its conjugation to phosphatidylethanolamine (PE) and its insertion to membranes, which is necessary for autophagy. The ATG8-PE conjugate mediates tethering between adjacent membranes and stimulates membrane hemifusion, leading to expansion of the autophagosomal membrane during autophagy. In addition to the protease activity, also catalyzes deconjugation of PE-conjugated forms of ATG8 during macroautophagy: ATG8 delipidation is required to release the protein from membranes, which facilitates multiple events during macroautophagy, and especially for efficient autophagosome biogenesis, the assembly of ATG9-containing tubulovesicular clusters into phagophores/autophagosomes, and for the disassembly of PAS-associated ATG components. ATG8 delipidation by ATG4 also recycles ATG8-PE generated on inappropriate membranes to maintain a reservoir of unlipidated ATG8 that is required for autophagosome formation at the PAS. This chain is Cysteine protease ATG4 (ATG4), found in Saccharomyces cerevisiae (strain YJM789) (Baker's yeast).